We begin with the raw amino-acid sequence, 458 residues long: Phosphoglucosamine mutase (458 aa).

Ser-106 functions as the Phosphoserine intermediate in the catalytic mechanism. Mg(2+) is bound by residues Ser-106, Asp-247, Asp-249, and Asp-251. A Phosphoserine modification is found at Ser-106.

This sequence belongs to the phosphohexose mutase family. Mg(2+) is required as a cofactor. Post-translationally, activated by phosphorylation.

The enzyme catalyses alpha-D-glucosamine 1-phosphate = D-glucosamine 6-phosphate. Its function is as follows. Catalyzes the conversion of glucosamine-6-phosphate to glucosamine-1-phosphate. The sequence is that of Phosphoglucosamine mutase from Chlamydia trachomatis serovar A (strain ATCC VR-571B / DSM 19440 / HAR-13).